A 358-amino-acid polypeptide reads, in one-letter code: 3-isopropylmalate dehydrogenase 2 (358 aa).

Position 74 to 87 (74 to 87 (GPKWDKLPAESRPE)) interacts with NAD(+). Arg-94, Arg-104, Arg-132, and Asp-221 together coordinate substrate. 3 residues coordinate Mg(2+): Asp-221, Asp-245, and Asp-249. 279–291 (GSAPDIAGQGVAN) lines the NAD(+) pocket.

This sequence belongs to the isocitrate and isopropylmalate dehydrogenases family. LeuB type 1 subfamily. As to quaternary structure, homodimer. Mg(2+) serves as cofactor. It depends on Mn(2+) as a cofactor.

The protein resides in the cytoplasm. The enzyme catalyses (2R,3S)-3-isopropylmalate + NAD(+) = 4-methyl-2-oxopentanoate + CO2 + NADH. Its pathway is amino-acid biosynthesis; L-leucine biosynthesis; L-leucine from 3-methyl-2-oxobutanoate: step 3/4. Functionally, catalyzes the oxidation of 3-carboxy-2-hydroxy-4-methylpentanoate (3-isopropylmalate) to 3-carboxy-4-methyl-2-oxopentanoate. The product decarboxylates to 4-methyl-2 oxopentanoate. In Dechloromonas aromatica (strain RCB), this protein is 3-isopropylmalate dehydrogenase 2.